Reading from the N-terminus, the 863-residue chain is FO synthase (863 aa).

2 consecutive Radical SAM core domains span residues 91-343 (ITYS…APPN) and 551-792 (VTFV…SHIQ). Residues 92–424 (TYSRKVFIPV…PRVRGHVVAL (333 aa)) form a cofG-like region. [4Fe-4S] cluster-binding residues include cysteine 105, cysteine 109, cysteine 112, cysteine 565, cysteine 569, and cysteine 572. Positions 528–861 (DGPALEAVTA…RQRTTTYALR (334 aa)) are cofH-like.

In the N-terminal section; belongs to the radical SAM superfamily. CofG family. It in the C-terminal section; belongs to the radical SAM superfamily. CofH family. The cofactor is [4Fe-4S] cluster.

The catalysed reaction is 5-amino-6-(D-ribitylamino)uracil + L-tyrosine + S-adenosyl-L-methionine = 5-amino-5-(4-hydroxybenzyl)-6-(D-ribitylimino)-5,6-dihydrouracil + 2-iminoacetate + 5'-deoxyadenosine + L-methionine + H(+). It carries out the reaction 5-amino-5-(4-hydroxybenzyl)-6-(D-ribitylimino)-5,6-dihydrouracil + S-adenosyl-L-methionine = 7,8-didemethyl-8-hydroxy-5-deazariboflavin + 5'-deoxyadenosine + L-methionine + NH4(+) + H(+). It functions in the pathway cofactor biosynthesis; coenzyme F0 biosynthesis. In terms of biological role, catalyzes the radical-mediated synthesis of 7,8-didemethyl-8-hydroxy-5-deazariboflavin (FO) from 5-amino-6-(D-ribitylamino)uracil and L-tyrosine. This chain is FO synthase (fbiC), found in Mycobacterium leprae (strain TN).